The sequence spans 4042 residues: Polyketide synthase-nonribosomal peptide synthetase ffsA (4042 aa).

In terms of domain architecture, Ketosynthase family 3 (KS3) spans 17–453 (REPIAIVGSA…GANAHAILEA (437 aa)). Catalysis depends on for beta-ketoacyl synthase activity residues cysteine 190, histidine 330, and histidine 373. Positions 561–878 (VFTGQGAQWK…TGLLSRGRPD (318 aa)) are malonyl-CoA:ACP transacylase (MAT) domain. An N-terminal hotdog fold region spans residues 950-1083 (HEILGTKCPD…GKLKVTLGEP (134 aa)). The interval 950–1249 (HEILGTKCPD…LQTKPLANAT (300 aa)) is dehydratase (DH) domain. Positions 950-1251 (HEILGTKCPD…TKPLANATAA (302 aa)) constitute a PKS/mFAS DH domain. Catalysis depends on histidine 982, which acts as the Proton acceptor; for dehydratase activity. Residues 1098 to 1251 (MIDVDSERFY…TKPLANATAA (154 aa)) are C-terminal hotdog fold. The active-site Proton donor; for dehydratase activity is aspartate 1158. Residues 1390-1613 (DNLLNDFYVH…VDDHVNFLRD (224 aa)) are methyltransferase (MT) domain. The segment at 2116-2289 (TYWLVGLSGG…AGSAINIGTI (174 aa)) is ketoreductase (KR)domain. The region spanning 2399–2476 (EAREIIEESL…EMVAAAQEKL (78 aa)) is the Carrier 1 domain. The residue at position 2436 (serine 2436) is an O-(pantetheine 4'-phosphoryl)serine. The interval 2515–2601 (EKAEYADFDD…FDSDSDNASI (87 aa)) is disordered. The span at 2520–2532 (ADFDDENEEEGIP) shows a compositional bias: acidic residues. The segment at 2629 to 3061 (RTLPMSFGQT…ISRPSLYDPQ (433 aa)) is condensation. Positions 3089–3486 (EIVKAHGSKV…EDGHLVLEGR (398 aa)) are adenylation. The region spanning 3607 to 3684 (RDSTEKLKDI…AMARMVDPTA (78 aa)) is the Carrier 2 domain. Serine 3644 is modified (O-(pantetheine 4'-phosphoryl)serine). The reductase-like domain stretch occupies residues 3750–3971 (ITGATGFLGK…DFVDVEKVAT (222 aa)).

It in the C-terminal section; belongs to the NRP synthetase family.

Its pathway is mycotoxin biosynthesis. Hybrid PKS-NRPS synthetase; part of the gene cluster that mediates the biosynthesis of the cytotoxic leucine-containing cytochalasans, including aspochalasin C, aspochalasin E, TMC-169, flavichalasine F, aspergillin PZ, aspochalasin M and flavichalasine G. The first step in the pathway is catalyzed by the hybrid PKS-NRPS ffsA that utilizes 8 units of malonyl-CoA to iteratively assemble the octaketide chain before addition of L-leucine by the C-terminal NRPS modules. Because ffsA lacks a designated enoylreductase (ER) domain, the required activity is provided the enoyl reductase fssC. The methyltransferase (MT) domain of ffsA catalyzes the alpha-methylation at C10 and C14 using S-adenosyl-L-methionine as the methyl-donating cosubstrate. Reduction by the hydrolyase ffsE, followed by dehydration and intra-molecular Diels-Alder cyclization by the Diels-Alderase ffsF then yield the required isoindolone-fused macrocycle. A number of oxidative steps catalyzed by the tailoring cytochrome P450 monooxygenase ffsD, the FAD-linked oxidoreductase ffsJ and the short-chain dehydrogenase/reductase ffsI, are further required to afford the final products. The chain is Polyketide synthase-nonribosomal peptide synthetase ffsA from Aspergillus flavipes.